A 341-amino-acid chain; its full sequence is N-acetyl-gamma-glutamyl-phosphate reductase (341 aa).

The active site involves C147.

Belongs to the NAGSA dehydrogenase family. Type 1 subfamily.

It is found in the cytoplasm. It carries out the reaction N-acetyl-L-glutamate 5-semialdehyde + phosphate + NADP(+) = N-acetyl-L-glutamyl 5-phosphate + NADPH + H(+). It participates in amino-acid biosynthesis; L-arginine biosynthesis; N(2)-acetyl-L-ornithine from L-glutamate: step 3/4. Its function is as follows. Catalyzes the NADPH-dependent reduction of N-acetyl-5-glutamyl phosphate to yield N-acetyl-L-glutamate 5-semialdehyde. This Dehalococcoides mccartyi (strain ATCC BAA-2100 / JCM 16839 / KCTC 5957 / BAV1) protein is N-acetyl-gamma-glutamyl-phosphate reductase.